Here is a 138-residue protein sequence, read N- to C-terminus: Histone H2B.4 (138 aa).

Positions 1–39 (MAPKAAEKKPAEKKPAGKAPAEKLPKAEKKISKDAGGSE) are enriched in basic and acidic residues. The tract at residues 1–48 (MAPKAAEKKPAEKKPAGKAPAEKLPKAEKKISKDAGGSEKKKKKSKKS) is disordered. Ala2 bears the N,N,N-trimethylalanine; alternate mark. Position 2 is a n,N-dimethylalanine; alternate (Ala2). Ala2 is modified (N-methylalanine; alternate). At Lys4 the chain carries N6-methyllysine. N6-acetyllysine occurs at positions 8 and 13. Lys14 bears the N6,N6-dimethyllysine mark. 4 positions are modified to N6-acetyllysine: Lys18, Lys23, Lys29, and Lys30. Lys135 participates in a covalent cross-link: Glycyl lysine isopeptide (Lys-Gly) (interchain with G-Cter in ubiquitin).

It belongs to the histone H2B family. In terms of assembly, the nucleosome is a histone octamer containing two molecules each of H2A, H2B, H3 and H4 assembled in one H3-H4 heterotetramer and two H2A-H2B heterodimers. The octamer wraps approximately 147 bp of DNA. In terms of processing, can be acetylated to form H2BK6ac, H2BK33ac and H2BK34ac. Post-translationally, monoubiquitinated by BRE1 to form H2BK143ub1 and deubiquitinated by UBP26. Required for heterochromatic histone H3 di- and trimethylation at H3K4me. May give a specific tag for epigenetic transcriptional activation.

It localises to the nucleus. The protein localises to the chromosome. In terms of biological role, core component of nucleosome. Nucleosomes wrap and compact DNA into chromatin, limiting DNA accessibility to the cellular machineries which require DNA as a template. Histones thereby play a central role in transcription regulation, DNA repair, DNA replication and chromosomal stability. DNA accessibility is regulated via a complex set of post-translational modifications of histones, also called histone code, and nucleosome remodeling. In Arabidopsis thaliana (Mouse-ear cress), this protein is Histone H2B.4.